We begin with the raw amino-acid sequence, 238 residues long: Serine protease SplE (238 aa).

Residues 1 to 36 (MNKNIIIKSIAALTILTSVTGVGTTMVEGIQQTAKA) form the signal peptide. Residues His75, Asp113, and Ser191 each act as charge relay system in the active site.

It belongs to the peptidase S1B family.

It localises to the secreted. The polypeptide is Serine protease SplE (splE) (Staphylococcus aureus).